The sequence spans 39 residues: Contryphan-Cal1 (39 aa).

The signal sequence occupies residues 1 to 20 (MTRTAVLLLTLLFLVAMAAS). A disulfide bridge connects residues C29 and C35.

As to expression, expressed by the venom duct.

The protein resides in the secreted. In terms of biological role, probable neurotoxin. This is Contryphan-Cal1 from Californiconus californicus (California cone).